Reading from the N-terminus, the 155-residue chain is uncharacterized protein (155 aa).

This is an uncharacterized protein from Methanocaldococcus jannaschii (strain ATCC 43067 / DSM 2661 / JAL-1 / JCM 10045 / NBRC 100440) (Methanococcus jannaschii).